The sequence spans 130 residues: Small ribosomal subunit protein uS8 (130 aa).

The protein belongs to the universal ribosomal protein uS8 family. In terms of assembly, part of the 30S ribosomal subunit. Contacts proteins S5 and S12.

Its function is as follows. One of the primary rRNA binding proteins, it binds directly to 16S rRNA central domain where it helps coordinate assembly of the platform of the 30S subunit. This is Small ribosomal subunit protein uS8 from Onion yellows phytoplasma (strain OY-M).